The primary structure comprises 143 residues: Small ribosomal subunit protein eS19y (143 aa).

This sequence belongs to the eukaryotic ribosomal protein eS19 family.

This chain is Small ribosomal subunit protein eS19y (RPS19B), found in Arabidopsis thaliana (Mouse-ear cress).